The primary structure comprises 204 residues: Thymidine kinase (204 aa).

ATP contacts are provided by residues 15-22 and 88-91; these read GSMFSGKS and DEVQ. The active-site Proton acceptor is the glutamate 89. Residues cysteine 145, cysteine 148, cysteine 183, and cysteine 186 each coordinate Zn(2+).

This sequence belongs to the thymidine kinase family. As to quaternary structure, homotetramer.

It is found in the cytoplasm. The catalysed reaction is thymidine + ATP = dTMP + ADP + H(+). This is Thymidine kinase from Halalkalibacterium halodurans (strain ATCC BAA-125 / DSM 18197 / FERM 7344 / JCM 9153 / C-125) (Bacillus halodurans).